A 259-amino-acid chain; its full sequence is Indole-3-glycerol phosphate synthase (259 aa).

It belongs to the TrpC family.

It carries out the reaction 1-(2-carboxyphenylamino)-1-deoxy-D-ribulose 5-phosphate + H(+) = (1S,2R)-1-C-(indol-3-yl)glycerol 3-phosphate + CO2 + H2O. The protein operates within amino-acid biosynthesis; L-tryptophan biosynthesis; L-tryptophan from chorismate: step 4/5. The sequence is that of Indole-3-glycerol phosphate synthase from Dehalococcoides mccartyi (strain CBDB1).